Consider the following 602-residue polypeptide: MHCHNLNNIRNFSIIAHIDHGKSTLADRLLELTNTVAARDMQEQLLDDMDLERERGITIKAHPVTMYYKGNDGQTYQINLIDTPGHVDFTYEVSRSLAACEGAILVVDAGQGVQAQSLANVHLALERNLEIVPVINKIDLPAADVEGVRKQIEDVIGLDASDAIGCSAKSGLGVKDVLERILTAVPPPQEPKDNLLRALVFDSHYDVYRGVMVYIRVMSGEIKRGSLIKMMATNKNFEVLEVGMFTPKEKPVEQLRPGEVGYMIANIKTPSDVKIGDTITLQKYPAPEALPGFKIISPVVFAGIYPIDATEFEGLRDALGKLQLNDSALHIEQESSTALGFGFRCGFLGLLHLEIVFERIQREFNIDIISTAPSVIYRFTLDDGVVKTVDNPAHYPDPTFIRMVEEPWVKCHIMIPSEYLGAIMNLGMDKRGVCTKTETMDARRLLLTYRLPLNEIITDFNDKLKSITKGYGSFDYEFDCYEPSEIIKLEIRVNEEPVDAFSCLVHRTKAESKGRAICAKLVEVIPMQLFKVPIQAAIGGKVVARETIRAITKNVTAKCYGGDISRKRKLWEKQKKGKKRMKEIGKVNIPQSAFMEVLKAGD.

The region spanning Asn7–Gln189 is the tr-type G domain. GTP is bound by residues Asp19 to Thr24 and Asn136 to Asp139.

Belongs to the TRAFAC class translation factor GTPase superfamily. Classic translation factor GTPase family. LepA subfamily.

The protein localises to the cell inner membrane. It catalyses the reaction GTP + H2O = GDP + phosphate + H(+). Its function is as follows. Required for accurate and efficient protein synthesis under certain stress conditions. May act as a fidelity factor of the translation reaction, by catalyzing a one-codon backward translocation of tRNAs on improperly translocated ribosomes. Back-translocation proceeds from a post-translocation (POST) complex to a pre-translocation (PRE) complex, thus giving elongation factor G a second chance to translocate the tRNAs correctly. Binds to ribosomes in a GTP-dependent manner. The sequence is that of Elongation factor 4 from Protochlamydia amoebophila (strain UWE25).